The sequence spans 276 residues: NADPH-dependent 7-cyano-7-deazaguanine reductase (276 aa).

80–82 (VES) serves as a coordination point for substrate. 82-83 (SK) lines the NADPH pocket. Cysteine 183 functions as the Thioimide intermediate in the catalytic mechanism. Catalysis depends on aspartate 190, which acts as the Proton donor. A substrate-binding site is contributed by 222–223 (HE). 251-252 (RG) contributes to the NADPH binding site.

This sequence belongs to the GTP cyclohydrolase I family. QueF type 2 subfamily. In terms of assembly, homodimer.

It localises to the cytoplasm. It catalyses the reaction 7-aminomethyl-7-carbaguanine + 2 NADP(+) = 7-cyano-7-deazaguanine + 2 NADPH + 3 H(+). It functions in the pathway tRNA modification; tRNA-queuosine biosynthesis. In terms of biological role, catalyzes the NADPH-dependent reduction of 7-cyano-7-deazaguanine (preQ0) to 7-aminomethyl-7-deazaguanine (preQ1). The sequence is that of NADPH-dependent 7-cyano-7-deazaguanine reductase from Burkholderia cenocepacia (strain HI2424).